The chain runs to 267 residues: Tryptophan synthase alpha chain (267 aa).

Catalysis depends on proton acceptor residues E47 and D58.

The protein belongs to the TrpA family. As to quaternary structure, tetramer of two alpha and two beta chains.

The enzyme catalyses (1S,2R)-1-C-(indol-3-yl)glycerol 3-phosphate + L-serine = D-glyceraldehyde 3-phosphate + L-tryptophan + H2O. It functions in the pathway amino-acid biosynthesis; L-tryptophan biosynthesis; L-tryptophan from chorismate: step 5/5. Functionally, the alpha subunit is responsible for the aldol cleavage of indoleglycerol phosphate to indole and glyceraldehyde 3-phosphate. The sequence is that of Tryptophan synthase alpha chain from Chlorobium chlorochromatii (strain CaD3).